We begin with the raw amino-acid sequence, 408 residues long: Aspartate aminotransferase, cytoplasmic (408 aa).

Residues Gly36, Trp133, and Asn187 each coordinate L-aspartate. Lys251 carries the N6-(pyridoxal phosphate)lysine modification. An L-aspartate-binding site is contributed by Arg379.

The protein belongs to the class-I pyridoxal-phosphate-dependent aminotransferase family. In terms of assembly, homodimer. Pyridoxal 5'-phosphate is required as a cofactor. In terms of tissue distribution, expressed in all somatic tissues including the nervous system.

Its subcellular location is the cytoplasm. It carries out the reaction L-aspartate + 2-oxoglutarate = oxaloacetate + L-glutamate. Its function is as follows. Biosynthesis of L-glutamate from L-aspartate. Important regulator of levels of glutamate, the major excitatory neurotransmitter of the central nervous system. This Caenorhabditis elegans protein is Aspartate aminotransferase, cytoplasmic.